Here is an 89-residue protein sequence, read N- to C-terminus: Sec translocon accessory complex subunit YrbF (89 aa).

The chain crosses the membrane as a helical span at residues 4–24 (GTLGTLVPIILMFAVLYFLLI).

This sequence belongs to the YajC family. In terms of assembly, part of the SecDF-YidC-YajC translocase complex. The SecDF-YidC-YajC translocase forms a supercomplex with SecYEG, called the holo-translocon (HTL).

It is found in the cell membrane. Functionally, the SecYEG-SecDF-YajC-YidC holo-translocon (HTL) protein secretase/insertase is a supercomplex required for protein secretion, insertion of proteins into membranes, and assembly of membrane protein complexes. While the SecYEG complex is essential for assembly of a number of proteins and complexes, the SecDF-YajC-YidC subcomplex facilitates these functions. This is Sec translocon accessory complex subunit YrbF (yrbF) from Bacillus subtilis (strain 168).